A 622-amino-acid polypeptide reads, in one-letter code: Procollagen galactosyltransferase 1 (622 aa).

A signal peptide spans 1–29 (MAAAPRAGRRRGQPLLALLLLLLAPLPPG). 3 N-linked (GlcNAc...) asparagine glycosylation sites follow: Asn-96, Asn-184, and Asn-381. Residues 588-606 (RAKSQKMREQQALSREAKN) show a composition bias toward basic and acidic residues. The disordered stretch occupies residues 588–622 (RAKSQKMREQQALSREAKNSDVLQSPLDSAARDEL). An Endoplasmic reticulum retention motif motif is present at residues 619-622 (RDEL).

It belongs to the glycosyltransferase 25 family. In terms of processing, N-glycosylated. As to expression, ubiquitous with higher levels in placenta, heart, lung and spleen.

The protein resides in the endoplasmic reticulum lumen. The enzyme catalyses (5R)-5-hydroxy-L-lysyl-[collagen] + UDP-alpha-D-galactose = (5R)-5-O-(beta-D-galactosyl)-5-hydroxy-L-lysyl-[collagen] + UDP + H(+). In terms of biological role, beta-galactosyltransferase that transfers beta-galactose to hydroxylysine residues of type I collagen. By acting on collagen glycosylation, facilitates the formation of collagen triple helix. Also involved in the biosynthesis of collagen type IV. This is Procollagen galactosyltransferase 1 (COLGALT1) from Homo sapiens (Human).